The chain runs to 310 residues: Cytosolic Fe-S cluster assembly factor Nubp1 homolog (310 aa).

The [4Fe-4S] cluster site is built by C9, C23, C26, and C32. ATP is bound at residue 63–70 (GKGGVGKS). The [4Fe-4S] cluster site is built by C240 and C243.

Belongs to the Mrp/NBP35 ATP-binding proteins family. NUBP1/NBP35 subfamily. In terms of assembly, heterotetramer of 2 Nubp1 and 2 Nubp2 chains. Requires [4Fe-4S] cluster as cofactor.

The protein localises to the cytoplasm. In terms of biological role, component of the cytosolic iron-sulfur (Fe/S) protein assembly (CIA) machinery. Required for maturation of extramitochondrial Fe-S proteins. The Nubp1-Nubp2 heterotetramer forms a Fe-S scaffold complex, mediating the de novo assembly of an Fe-S cluster and its transfer to target apoproteins. The protein is Cytosolic Fe-S cluster assembly factor Nubp1 homolog of Drosophila mojavensis (Fruit fly).